The sequence spans 269 residues: Surfeit locus protein 4 (269 aa).

The next 5 membrane-spanning stretches (helical) occupy residues 64 to 84 (LLAS…CVLV), 92 to 112 (YACF…SILW), 179 to 199 (FFSI…AIGF), 203 to 223 (LAAL…NAFW), and 239 to 259 (FFQT…GPGG). The Di-lysine motif signature appears at 266–269 (KKEW).

This sequence belongs to the SURF4 family. In terms of assembly, found in a complex composed at least of SURF4, TMED2 and TMED10. May interact with LMAN1. Interacts with ZFYVE27 and with KIF5A in a ZFYVE27-dependent manner. Interacts with STING1. Interacts with SAR1B. Interacts with TMEM41B.

It localises to the endoplasmic reticulum membrane. Its subcellular location is the endoplasmic reticulum-Golgi intermediate compartment membrane. The protein localises to the golgi apparatus membrane. Endoplasmic reticulum cargo receptor that mediates the export of lipoproteins by recruiting cargos into COPII vesicles to facilitate their secretion. Acts as a cargo receptor for lipoproteins bearing both APOB and APOA1, thereby regulating lipoprotein delivery and the maintenance of lipid homeostasis. Synergizes with the GTPase SAR1B to mediate transport of circulating lipoproteins. Promotes the secretion of PCSK9. Also mediates the efficient secretion of erythropoietin (EPO). May also play a role in the maintenance of the architecture of the endoplasmic reticulum-Golgi intermediate compartment and of the Golgi. This Homo sapiens (Human) protein is Surfeit locus protein 4.